The chain runs to 424 residues: Enolase (424 aa).

Glutamine 162 contributes to the (2R)-2-phosphoglycerate binding site. Glutamate 204 acts as the Proton donor in catalysis. 3 residues coordinate Mg(2+): aspartate 241, glutamate 284, and aspartate 311. Positions 336, 365, 366, and 387 each coordinate (2R)-2-phosphoglycerate. Lysine 336 serves as the catalytic Proton acceptor.

The protein belongs to the enolase family. It depends on Mg(2+) as a cofactor.

The protein localises to the cytoplasm. It localises to the secreted. It is found in the cell surface. It catalyses the reaction (2R)-2-phosphoglycerate = phosphoenolpyruvate + H2O. Its pathway is carbohydrate degradation; glycolysis; pyruvate from D-glyceraldehyde 3-phosphate: step 4/5. Its function is as follows. Catalyzes the reversible conversion of 2-phosphoglycerate (2-PG) into phosphoenolpyruvate (PEP). It is essential for the degradation of carbohydrates via glycolysis. The protein is Enolase of Rhizobium meliloti (strain 1021) (Ensifer meliloti).